The primary structure comprises 65 residues: Temporin-SN1 (65 aa).

An N-terminal signal peptide occupies residues M1–C22. Residues Q23–Q44 constitute a propeptide, removed in mature form. K65 is subject to Lysine amide.

The protein belongs to the frog skin active peptide (FSAP) family. Temporin subfamily. As to expression, expressed by the skin glands.

It localises to the secreted. In terms of biological role, antimicrobial peptide. Active against a variety of Gram-positive bacterial strains. Not active against Gram-negative bacteria and against fungi. Shows hemolytic activity against human erythrocytes. This Sylvirana spinulosa (Fine-spined frog) protein is Temporin-SN1.